The following is a 555-amino-acid chain: GMP synthase [glutamine-hydrolyzing] (555 aa).

The 227-residue stretch at 8–234 folds into the Glutamine amidotransferase type-1 domain; the sequence is KILVLNFGSQ…AYNICKCKKQ (227 aa). The active-site Nucleophile; for GATase activity is Cys-89. Residues Gln-93, Asn-169, Asp-172, and His-208 each contribute to the L-glutamine site. Catalysis depends on for GATase activity residues His-208 and Glu-210. One can recognise a GMPS ATP-PPase domain in the interval 235-430; sequence FDPIRYHELE…LNLPEEITNR (196 aa). Position 262-268 (262-268) interacts with ATP; sequence SGGIDST. Residues Arg-336, Gln-476, Lys-547, Ile-552, and Glu-553 each coordinate XMP.

In terms of assembly, homodimer (via the GMPS ATP-PPase domain). It depends on Mg(2+) as a cofactor.

The enzyme catalyses XMP + L-glutamine + ATP + H2O = GMP + L-glutamate + AMP + diphosphate + 2 H(+). The protein operates within purine metabolism; GMP biosynthesis; GMP from XMP (L-Gln route): step 1/1. With respect to regulation, the GATase domain is allosterically activated by the binding of substrates, ATP and XMP, to the ATPPase domain, thus ensuring that glutamine hydrolysis occurs only when the ATPPase domain is primed to receive ammonia. Inhibited by Na(+). Inhibited by the reaction product GMP. Its function is as follows. Catalyzes the conversion of xanthine monophosphate (XMP) to GMP in the presence of glutamine and ATP through an adenyl-XMP intermediate, which is the final step of de novo synthesis of GMP. The conversion of XMP to GMP involves the coordinated action of the glutamine amidotransferase (GATase) domain that catalyzes the hydrolysis of the amide side chain of glutamine producing ammonia and the ATP pyrophosphatase (ATPPase) domain that catalyzes the synthesis of adenyl-XMP intermediate from ATP. The ammonia produced by the GATase domain is tunnelled to the ATP-PPase domain where it attacks the adenyl-XMP intermediate generating GMP. This chain is GMP synthase [glutamine-hydrolyzing], found in Plasmodium falciparum (isolate 3D7).